The chain runs to 350 residues: RNA 3'-terminal phosphate cyclase (350 aa).

ATP is bound by residues Q107 and 290 to 294 (FLGDQ). The active-site Tele-AMP-histidine intermediate is H316.

It belongs to the RNA 3'-terminal cyclase family. Type 1 subfamily.

The protein localises to the cytoplasm. It catalyses the reaction a 3'-end 3'-phospho-ribonucleotide-RNA + ATP = a 3'-end 2',3'-cyclophospho-ribonucleotide-RNA + AMP + diphosphate. Catalyzes the conversion of 3'-phosphate to a 2',3'-cyclic phosphodiester at the end of RNA. The mechanism of action of the enzyme occurs in 3 steps: (A) adenylation of the enzyme by ATP; (B) transfer of adenylate to an RNA-N3'P to produce RNA-N3'PP5'A; (C) and attack of the adjacent 2'-hydroxyl on the 3'-phosphorus in the diester linkage to produce the cyclic end product. The biological role of this enzyme is unknown but it is likely to function in some aspects of cellular RNA processing. This is RNA 3'-terminal phosphate cyclase from Gloeothece citriformis (strain PCC 7424) (Cyanothece sp. (strain PCC 7424)).